A 316-amino-acid polypeptide reads, in one-letter code: Transcription termination/antitermination protein NusG (316 aa).

This sequence belongs to the NusG family.

Its function is as follows. Participates in transcription elongation, termination and antitermination. This Mycoplasma genitalium (strain ATCC 33530 / DSM 19775 / NCTC 10195 / G37) (Mycoplasmoides genitalium) protein is Transcription termination/antitermination protein NusG.